Here is a 79-residue protein sequence, read N- to C-terminus: Toxin 3FTx-Oxy5 (79 aa).

A signal peptide spans 1-23 (MKTLLLTLVVMTIVCLDLGYTLT). Disulfide bonds link cysteine 24-cysteine 41, cysteine 34-cysteine 59, cysteine 63-cysteine 71, and cysteine 72-cysteine 77.

This sequence belongs to the three-finger toxin family. Short-chain subfamily. As to expression, expressed by the venom gland.

Its subcellular location is the secreted. The protein is Toxin 3FTx-Oxy5 of Oxyuranus microlepidotus (Inland taipan).